Here is a 408-residue protein sequence, read N- to C-terminus: Peptidase T (408 aa).

His78 serves as a coordination point for Zn(2+). The active site involves Asp80. Asp141 serves as a coordination point for Zn(2+). Glu175 acts as the Proton acceptor in catalysis. 3 residues coordinate Zn(2+): Glu176, Asp198, and His380.

Belongs to the peptidase M20B family. It depends on Zn(2+) as a cofactor.

It localises to the cytoplasm. The catalysed reaction is Release of the N-terminal residue from a tripeptide.. Cleaves the N-terminal amino acid of tripeptides. The sequence is that of Peptidase T from Clostridium acetobutylicum (strain ATCC 824 / DSM 792 / JCM 1419 / IAM 19013 / LMG 5710 / NBRC 13948 / NRRL B-527 / VKM B-1787 / 2291 / W).